A 2173-amino-acid chain; its full sequence is Mediator of DNA damage checkpoint protein 1 (2173 aa).

A compositionally biased stretch (acidic residues) spans methionine 1 to glutamine 19. The disordered stretch occupies residues methionine 1–glutamate 22. An interaction with CHEK2 region spans residues methionine 1–threonine 150. The tract at residues glutamate 2–threonine 222 is interaction with the MRN complex. The residue at position 4 (threonine 4) is a Phosphothreonine. Residues asparagine 54 to lysine 105 enclose the FHA domain. Serine 108 is subject to Phosphoserine. The tract at residues leucine 145 to glutamate 570 is required for nuclear localization (NLS1). Threonine 146 carries the post-translational modification Phosphothreonine. Phosphoserine is present on residues serine 168, serine 176, serine 198, and serine 220. A disordered region spans residues serine 198–leucine 320. Threonine 222 carries the phosphothreonine modification. A compositionally biased stretch (low complexity) spans glycine 227 to threonine 244. The span at glutamine 259–valine 276 shows a compositional bias: basic and acidic residues. Serine 301 is modified (phosphoserine). Phosphothreonine is present on threonine 303. Over residues aspartate 308 to leucine 320 the composition is skewed to basic and acidic residues. Serine 331 carries the phosphoserine modification. Threonine 333 bears the Phosphothreonine mark. The tract at residues glycine 359 to glutamate 383 is disordered. Phosphoserine occurs at positions 374 and 378. Threonine 380 carries the phosphothreonine modification. 3 positions are modified to phosphoserine: serine 396, serine 399, and serine 404. Threonine 406 is subject to Phosphothreonine. The residue at position 413 (serine 413) is a Phosphoserine. The disordered stretch occupies residues leucine 444–serine 515. Threonine 451 is subject to Phosphothreonine. A Phosphoserine modification is found at serine 455. Threonine 457 carries the post-translational modification Phosphothreonine. Serine 487, serine 497, serine 500, serine 506, serine 507, and serine 515 each carry phosphoserine. Position 525 is a phosphothreonine (threonine 525). The residue at position 592 (serine 592) is a Phosphoserine. Lysine 618 participates in a covalent cross-link: Glycyl lysine isopeptide (Lys-Gly) (interchain with G-Cter in SUMO1); alternate. Lysine 618 participates in a covalent cross-link: Glycyl lysine isopeptide (Lys-Gly) (interchain with G-Cter in SUMO2); alternate. Phosphoserine is present on serine 631. Disordered regions lie at residues valine 652–aspartate 697 and histidine 773–serine 1770. Residues glycine 673–glutamate 687 are compositionally biased toward basic and acidic residues. The span at aspartate 688–aspartate 697 shows a compositional bias: acidic residues. Phosphoserine is present on residues serine 782 and serine 795. At lysine 814 the chain carries N6-acetyllysine. 4 stretches are compositionally biased toward basic and acidic residues: residues glutamate 821–threonine 846, glutamate 853–lysine 864, aspartate 870–glutamine 903, and alanine 916–proline 953. 5 positions are modified to phosphoserine: serine 957, serine 1000, serine 1035, serine 1070, and serine 1088. Residues serine 957–serine 969 are compositionally biased toward polar residues. Over residues threonine 1079–glutamate 1090 the composition is skewed to basic and acidic residues. Positions proline 1105–serine 1115 are enriched in basic residues. Positions proline 1131–serine 1156 are enriched in polar residues. Residues serine 1150–glutamate 1694 form an interaction with the PRKDC complex region. The span at valine 1157–glutamate 1169 shows a compositional bias: low complexity. The residue at position 1159 (threonine 1159) is a Phosphothreonine. Positions glutamine 1171 to threonine 1189 are enriched in polar residues. Position 1200 is a phosphothreonine (threonine 1200). Phosphoserine is present on serine 1237. A phosphothreonine mark is found at threonine 1241, threonine 1282, and threonine 1304. Over residues valine 1280 to glutamate 1292 the composition is skewed to low complexity. Polar residues predominate over residues glutamine 1294–serine 1320. A compositionally biased stretch (low complexity) spans valine 1321–glutamate 1333. Positions glutamine 1335 to threonine 1353 are enriched in polar residues. The segment covering threonine 1390–serine 1402 has biased composition (low complexity). Polar residues-rich tracts occupy residues proline 1418–proline 1434, lysine 1456–serine 1487, glutamine 1499–lysine 1527, and glutamine 1540–arginine 1559. Phosphoserine occurs at positions 1483 and 1484. Position 1486 is an N6-acetyllysine (lysine 1486). Phosphothreonine occurs at positions 1509 and 1550. Positions valine 1567 to proline 1578 are enriched in low complexity. The segment covering glutamine 1581–threonine 1598 has biased composition (polar residues). Phosphothreonine is present on residues threonine 1617 and threonine 1632. The span at serine 1626–alanine 1639 shows a compositional bias: polar residues. At serine 1648 the chain carries Phosphoserine. Phosphothreonine is present on residues threonine 1651 and threonine 1673. Residues proline 1664–alanine 1680 are compositionally biased toward polar residues. Phosphoserine is present on serine 1688. A phosphothreonine mark is found at threonine 1692, threonine 1714, threonine 1748, and threonine 1755. Over residues proline 1705–alanine 1721 the composition is skewed to polar residues. Residues glutamine 1761 to serine 1770 show a composition bias toward polar residues. Phosphoserine is present on serine 1765. A Phosphothreonine modification is found at threonine 1781. The interval proline 1782 to threonine 2173 is required for nuclear localization (NLS2). Serine 1786 and serine 1795 each carry phosphoserine. The disordered stretch occupies residues arginine 1809–asparagine 1971. Lysine 1824 participates in a covalent cross-link: Glycyl lysine isopeptide (Lys-Gly) (interchain with G-Cter in SUMO2). Serine 1859 is modified (phosphoserine). A Glycyl lysine isopeptide (Lys-Gly) (interchain with G-Cter in SUMO2) cross-link involves residue lysine 1874. Residue threonine 1884 is modified to Phosphothreonine. Serine 1904 is subject to Phosphoserine. Over residues histidine 1907–threonine 1920 the composition is skewed to polar residues. Lysine 1924 is covalently cross-linked (Glycyl lysine isopeptide (Lys-Gly) (interchain with G-Cter in SUMO1); alternate). Residue lysine 1924 forms a Glycyl lysine isopeptide (Lys-Gly) (interchain with G-Cter in SUMO2); alternate linkage. Positions alanine 1931–methionine 1941 are enriched in basic and acidic residues. Threonine 1942 carries the phosphothreonine modification. 2 BRCT domains span residues alanine 1976–valine 2054 and arginine 2075–serine 2166. Residue arginine 2027 is modified to Omega-N-methylarginine.

In terms of assembly, homodimer. Interacts with H2AX, which requires phosphorylation of H2AX on 'Ser-139'. Interacts with the MRN complex, composed of MRE11, RAD50, and NBN. Interacts with CHEK2, which requires ATM-mediated phosphorylation of 'Thr-68' within the FHA domain of CHEK2. Interacts constitutively with the BRCA1-BARD1 complex, SMC1A and TP53BP1. Interacts with ATM and FANCD2, and these interactions are reduced upon DNA damage. Also interacts with the PRKDC complex, composed of XRCC6/KU70, XRCC5/KU80 and PRKDC/XRCC7. This interaction may be required for PRKDC autophosphorylation, which is essential for DNA double strand break (DSB) repair. When phosphorylated by ATM, interacts with RNF8 (via FHA domain). Interacts with CEP164. When phosphorylated, interacts with APTX (via FHA-like domain). Interacts (when phosphorylated) with TOPBP1; promoting TOPBP1 localization to DNA damage sites during mitosis. Interacts (when phosphorylated) with NBN; promoting NBN and MRN complex localization to DNA damage sites. In terms of processing, phosphorylated upon exposure to ionizing radiation (IR), ultraviolet radiation (UV), and hydroxyurea (HU). Phosphorylation in response to IR requires ATM, NBN, and possibly CHEK2. Also phosphorylated during the G2/M phase of the cell cycle and during activation of the mitotic spindle checkpoint. Phosphorylation at Thr-4 by ATM stabilizes and enhances homodimerization via the FHA domain. Phosphorylated at Ser-168 and Ser-198 by CK2 in response to DNA damage during mitosis, promoting interaction with TOPBP1. Phosphorylated by CK2 in response to DNA damage, promoting interaction with NBN and recruitment of the MRN complex to DNA damage sites. Sumoylation at Lys-1924 by PIAS4 following DNA damage promotes ubiquitin-mediated degradation. Post-translationally, ubiquitinated by RNF4, leading to proteasomal degradation; undergoes 'Lys-48'-linked polyubiquitination.

It localises to the nucleus. It is found in the chromosome. Its function is as follows. Histone reader protein required for checkpoint-mediated cell cycle arrest in response to DNA damage within both the S phase and G2/M phases of the cell cycle. Specifically recognizes and binds histone H2AX phosphorylated at 'Ser-139', a marker of DNA damage, serving as a scaffold for the recruitment of DNA repair and signal transduction proteins to discrete foci of DNA damage sites. Also required for downstream events subsequent to the recruitment of these proteins. These include phosphorylation and activation of the ATM, CHEK1 and CHEK2 kinases, and stabilization of TP53/p53 and apoptosis. ATM and CHEK2 may also be activated independently by a parallel pathway mediated by TP53BP1. Required for chromosomal stability during mitosis by promoting recruitment of TOPBP1 to DNA double strand breaks (DSBs): TOPBP1 forms filamentous assemblies that bridge MDC1 and tether broken chromosomes during mitosis. Required for the repair of DSBs via homologous recombination by promoting recruitment of NBN component of the MRN complex to DSBs. This Macaca mulatta (Rhesus macaque) protein is Mediator of DNA damage checkpoint protein 1 (MDC1).